A 1058-amino-acid chain; its full sequence is Receptor-type guanylate cyclase gcy-22 (1058 aa).

An N-terminal signal peptide occupies residues 1–23 (MSFISKCFICLLFSTYFLPPVNS). Residues 25–470 (VLQVGFLAAN…PKSFTDQYLA (446 aa)) lie on the Extracellular side of the membrane. 9 N-linked (GlcNAc...) asparagine glycosylation sites follow: asparagine 36, asparagine 73, asparagine 201, asparagine 215, asparagine 277, asparagine 302, asparagine 324, asparagine 350, and asparagine 386. A helical transmembrane segment spans residues 471–491 (IILGCTAAALVLIIAVISTIV). The Cytoplasmic portion of the chain corresponds to 492 to 1058 (FLVRSKRQEE…IEAKENGESI (567 aa)). In terms of domain architecture, Protein kinase spans 501–809 (EERLNQLWQV…SSNLMDHVFN (309 aa)). A coiled-coil region spans residues 811 to 840 (LEQYASNLEDEVQARMKELTEEKKRSDVLL). A Guanylate cyclase domain is found at 867 to 997 (TIFFSDVVSF…DSVNTASRME (131 aa)).

It belongs to the adenylyl cyclase class-4/guanylyl cyclase family. As to expression, expression in ASER neuron begins at an early larval stage and is maintained in the adult.

The protein resides in the cell membrane. It catalyses the reaction GTP = 3',5'-cyclic GMP + diphosphate. Its function is as follows. Guanylate cyclase involved in the production of the second messenger cGMP. Regulates chemotaxis responses toward Li(1-), Mg(2+), Cl(1-), Br(1)- and I(1-) salt ions and methionine in ASE right (ASER) sensory neuron. May regulate ASER neuronal activity such as axon sprouting and calcium responses to changes in salt concentrations. The protein is Receptor-type guanylate cyclase gcy-22 of Caenorhabditis elegans.